The primary structure comprises 340 residues: L-threonine 3-dehydrogenase (340 aa).

Cys-38 is a binding site for Zn(2+). Catalysis depends on charge relay system residues Thr-40 and His-43. Zn(2+) contacts are provided by His-63, Glu-64, Cys-93, Cys-96, Cys-99, and Cys-107. Residues Ile-175, Asp-195, Arg-200, Leu-261–Ile-263, and Ile-285–Tyr-286 each bind NAD(+).

This sequence belongs to the zinc-containing alcohol dehydrogenase family. In terms of assembly, homotetramer. The cofactor is Zn(2+).

It is found in the cytoplasm. It catalyses the reaction L-threonine + NAD(+) = (2S)-2-amino-3-oxobutanoate + NADH + H(+). The protein operates within amino-acid degradation; L-threonine degradation via oxydo-reductase pathway; glycine from L-threonine: step 1/2. Its function is as follows. Catalyzes the NAD(+)-dependent oxidation of L-threonine to 2-amino-3-ketobutyrate. This chain is L-threonine 3-dehydrogenase, found in Stenotrophomonas maltophilia (strain K279a).